The sequence spans 141 residues: HTH-type transcriptional repressor NsrR (141 aa).

Residues 2–129 form the HTH rrf2-type domain; the sequence is QLTNFTDYGL…DNYTLADLVE (128 aa). The segment at residues 28-51 is a DNA-binding region (H-T-H motif); the sequence is ISEVTDVYGVSRNHMVKIINQLSR. Cys91, Cys96, and Cys102 together coordinate [2Fe-2S] cluster.

The cofactor is [2Fe-2S] cluster.

Nitric oxide-sensitive repressor of genes involved in protecting the cell against nitrosative stress. May require iron for activity. This chain is HTH-type transcriptional repressor NsrR, found in Shigella boydii serotype 18 (strain CDC 3083-94 / BS512).